The sequence spans 264 residues: Endoglucanase S (264 aa).

Residues 1-32 (MQTVNTQPHRIFRVLLPAVFSSLLLSSLTVSA) form the signal peptide.

It belongs to the glycosyl hydrolase 12 (cellulase H) family.

It catalyses the reaction Endohydrolysis of (1-&gt;4)-beta-D-glucosidic linkages in cellulose, lichenin and cereal beta-D-glucans.. In Pectobacterium parmentieri, this protein is Endoglucanase S (celS).